A 207-amino-acid polypeptide reads, in one-letter code: Large ribosomal subunit protein uL4 (207 aa).

A disordered region spans residues 48–70; sequence KAQKTRSEVSGGGAKPWRQKGTG.

It belongs to the universal ribosomal protein uL4 family. Part of the 50S ribosomal subunit.

Functionally, one of the primary rRNA binding proteins, this protein initially binds near the 5'-end of the 23S rRNA. It is important during the early stages of 50S assembly. It makes multiple contacts with different domains of the 23S rRNA in the assembled 50S subunit and ribosome. Forms part of the polypeptide exit tunnel. The protein is Large ribosomal subunit protein uL4 of Francisella philomiragia subsp. philomiragia (strain ATCC 25017 / CCUG 19701 / FSC 153 / O#319-036).